The primary structure comprises 163 residues: Nucleotide-binding protein YajQ (163 aa).

This sequence belongs to the YajQ family.

Nucleotide-binding protein. This Escherichia coli O81 (strain ED1a) protein is Nucleotide-binding protein YajQ.